A 358-amino-acid chain; its full sequence is tRNA-specific 2-thiouridylase MnmA (358 aa).

ATP contacts are provided by residues 6-13 (ALSGGVDS) and Met32. Residue Cys103 is the Nucleophile of the active site. A disulfide bridge connects residues Cys103 and Cys201. Gly127 lines the ATP pocket. Positions 151–153 (KDQ) are interaction with tRNA. Cys201 acts as the Cysteine persulfide intermediate in catalysis.

This sequence belongs to the MnmA/TRMU family.

It is found in the cytoplasm. It catalyses the reaction S-sulfanyl-L-cysteinyl-[protein] + uridine(34) in tRNA + AH2 + ATP = 2-thiouridine(34) in tRNA + L-cysteinyl-[protein] + A + AMP + diphosphate + H(+). Its function is as follows. Catalyzes the 2-thiolation of uridine at the wobble position (U34) of tRNA, leading to the formation of s(2)U34. The sequence is that of tRNA-specific 2-thiouridylase MnmA from Thermotoga sp. (strain RQ2).